The primary structure comprises 367 residues: Peptide chain release factor 2 (367 aa).

Gln-250 carries the N5-methylglutamine modification.

This sequence belongs to the prokaryotic/mitochondrial release factor family. Methylated by PrmC. Methylation increases the termination efficiency of RF2.

The protein localises to the cytoplasm. Its function is as follows. Peptide chain release factor 2 directs the termination of translation in response to the peptide chain termination codons UGA and UAA. The sequence is that of Peptide chain release factor 2 from Saccharopolyspora erythraea (strain ATCC 11635 / DSM 40517 / JCM 4748 / NBRC 13426 / NCIMB 8594 / NRRL 2338).